The chain runs to 513 residues: ATP synthase subunit beta (513 aa).

The disordered stretch occupies residues 1 to 29 (MATAPATEKKAPAKKAAAPKAAAPKKAAA). The span at 14–29 (KKAAAPKAAAPKKAAA) shows a compositional bias: low complexity. Residue 186-193 (GGAGVGKT) coordinates ATP.

This sequence belongs to the ATPase alpha/beta chains family. F-type ATPases have 2 components, CF(1) - the catalytic core - and CF(0) - the membrane proton channel. CF(1) has five subunits: alpha(3), beta(3), gamma(1), delta(1), epsilon(1). CF(0) has three main subunits: a(1), b(2) and c(9-12). The alpha and beta chains form an alternating ring which encloses part of the gamma chain. CF(1) is attached to CF(0) by a central stalk formed by the gamma and epsilon chains, while a peripheral stalk is formed by the delta and b chains.

The protein resides in the cell inner membrane. It carries out the reaction ATP + H2O + 4 H(+)(in) = ADP + phosphate + 5 H(+)(out). Its function is as follows. Produces ATP from ADP in the presence of a proton gradient across the membrane. The catalytic sites are hosted primarily by the beta subunits. In Sphingopyxis alaskensis (strain DSM 13593 / LMG 18877 / RB2256) (Sphingomonas alaskensis), this protein is ATP synthase subunit beta.